The chain runs to 370 residues: MAENQNCARMTRAAAKRKASSMALDENPVSKKRVVLGELPNMSNVVAVPNQERETLKAKTSVNTSKRQMKKALMIPEASVLIESRSVDPQMCEPFASDICAYLREMEGKPKHRPLPDYIEKVQSDLTPHMRAVLVDWLVEVAEEYKLVSDTLYLTISYVDRFLSVKPINRQKLQLVGVSAMLIASRKYEEIGPPKVEDFCYITDNTFTKQEVVSMEADILLALQFELGSPTIKTFLRRFTRVAQEDFKDSQLQIEFLCCYLSELSMLDYTCVKYLPSLLSASAVFLARFIIRPKQHPWNQMLEEYTKYKAADLQVCVGIIHDLYLSRRGNTLEAVRNKYKQHKYKCVATMPVSPELPLAFFEDITIRGMA.

Belongs to the cyclin family. Cyclin AB subfamily. Interacts with FZR2/CCS52A1, FZR1/CCS52A2 and FZR3/CCS52B.

In Arabidopsis thaliana (Mouse-ear cress), this protein is Cyclin-A3-4 (CYCA3-4).